The sequence spans 417 residues: Putative transporter AmpG 1 (417 aa).

A run of 12 helical transmembrane segments spans residues 7-27 (LCII…TGNT), 42-62 (IGIL…APIF), 78-98 (LSWI…FSFL), 104-124 (LLLF…QDTI), 143-163 (GIYI…AIYL), 171-191 (EIYK…IVGI), 225-245 (ALKP…LVLY), 273-293 (VGKF…GVIM), 301-321 (SIFL…FLEI), 328-348 (LLFI…TAYI), 366-386 (FLSS…GYMV), and 389-409 (FGWQ…LLIL).

Belongs to the major facilitator superfamily.

Its subcellular location is the cell inner membrane. The protein is Putative transporter AmpG 1 (ampG1) of Rickettsia conorii (strain ATCC VR-613 / Malish 7).